The chain runs to 436 residues: MSVSARSAAAEERSVNCGTMAQPKNLEGYVGFANLPNQVYRKSVKRGFEFTLMVVGESGLGKSTLINSLFLTDLYSPEYPGPSHRIKKTVQVEQSKVLIKEGGVQLLLTIVDTPGFGDAVDNSNCWQPVIDYIDSKFEDYLNAESRVNRRQMPDNRVQCCLYFIAPSGHGLKPLDIEFMKRLHEKVNIIPLIAKADTLTPEECQQFKKQIMKEIQEHKIKIYEFPETDDEEENKLVKKIKDRLPLAVVGSNTIIEVNGKRVRGRQYPWGVAEVENGEHCDFTILRNMLIRTHMQDLKDVTNNVHYENYRSRKLAAVTYNGVDNNKNKGQLTKSPLAQMEEERREHVAKMKKMEMEMEQVFEMKVKEKVQKLKDSEAELQRRHEQMKKNLEAQHKELEEKRRQFEEEKANWEAQQRILEQQNSSRTLEKNKKKGKIF.

Position 2 is an N-acetylserine (Ser-2). Phosphotyrosine is present on Tyr-29. The Septin-type G domain occupies 46 to 315 (RGFEFTLMVV…ENYRSRKLAA (270 aa)). An interaction with SEPTIN12 region spans residues 46–316 (RGFEFTLMVV…NYRSRKLAAV (271 aa)). The interval 56 to 63 (GESGLGKS) is G1 motif. Position 56-63 (56-63 (GESGLGKS)) interacts with GTP. Phosphoserine is present on Ser-76. GTP is bound by residues Thr-89, Gly-115, and 194-202 (KADTLTPEE). A G3 motif region spans residues 112–115 (DTPG). The interval 193-196 (AKAD) is G4 motif. A Phosphothreonine modification is found at Thr-227. Positions 249 and 264 each coordinate GTP. Residues 331–436 (TKSPLAQMEE…EKNKKKGKIF (106 aa)) are a coiled coil. Ser-333 carries the phosphoserine modification. At Lys-372 the chain carries N6-acetyllysine. The segment covering 377-409 (ELQRRHEQMKKNLEAQHKELEEKRRQFEEEKAN) has biased composition (basic and acidic residues). Residues 377 to 436 (ELQRRHEQMKKNLEAQHKELEEKRRQFEEEKANWEAQQRILEQQNSSRTLEKNKKKGKIF) form a disordered region. Ser-423 is subject to Phosphoserine. Position 425 is a phosphothreonine (Thr-425).

The protein belongs to the TRAFAC class TrmE-Era-EngA-EngB-Septin-like GTPase superfamily. Septin GTPase family. In terms of assembly, septins polymerize into heterooligomeric protein complexes that form filaments, and associate with cellular membranes, actin filaments and microtubules. GTPase activity is required for filament formation. Filaments are assembled from asymmetrical heterotrimers, composed of SEPTIN2, SEPTIN6 and SEPTIN7 that associate head-to-head to form a hexameric unit. Within the trimer, directly interacts with SEPTIN6, while interaction with SEPTIN2 seems indirect. In the absence of SEPTIN6, forms homodimers. Interacts directly with CENPE and links CENPE to septin filaments composed of SEPTIN2, SEPTIN6 and SEPTIN7. Interacts with SEPTIN8, SEPTIN9 and SEPTIN11. Component of a septin core octameric complex consisting of SEPTIN12, SEPTIN7, SEPTIN6 and SEPTIN2 or SEPTIN4 in the order 12-7-6-2-2-6-7-12 or 12-7-6-4-4-6-7-12 and located in the sperm annulus; the SEPTIN12:SEPTIN7 association is mediated by the respective GTP-binding domains. Interacts with SEPTIN2 and SEPTIN5. In terms of tissue distribution, expressed in the cerebral cortex (at protein level).

It is found in the cytoplasm. The protein localises to the chromosome. Its subcellular location is the centromere. It localises to the kinetochore. The protein resides in the cytoskeleton. It is found in the spindle. The protein localises to the cleavage furrow. Its subcellular location is the midbody. It localises to the cilium axoneme. The protein resides in the cell projection. It is found in the cilium. The protein localises to the flagellum. Filament-forming cytoskeletal GTPase. Required for normal organization of the actin cytoskeleton. Required for normal progress through mitosis. Involved in cytokinesis. Required for normal association of CENPE with the kinetochore. Plays a role in ciliogenesis and collective cell movements. Forms a filamentous structure with SEPTIN12, SEPTIN6, SEPTIN2 and probably SEPTIN4 at the sperm annulus which is required for the structural integrity and motility of the sperm tail during postmeiotic differentiation. The protein is Septin-7 of Mus musculus (Mouse).